Consider the following 372-residue polypeptide: MVAGEASGDLLGAHFFDALKKNRPGLTAAGIAGPRMVEAGVKAIYPSEKLAVNGYVEVLRHLPELLWIRARITRHFLRERPRVFVGIDAPDFNFTLEAALKRAGVPTIHFVSPSIWAWRPERIERIKQAVSHMLVVFPFEEAIYRDAGIPVSYVGHPLADVIPLQAPTGAARATLGLGDGPIVALLPGSRLSEVDRHARLMLEAAMQVRAKEMDVRFVLPAASEAARERIARAAQGLDLPLTVLAGRSHQALAACDVAVVASGTATLEAALFKKPMVITYRVPALTARLMRKKALLPWIGLPNILARDFVVPERVQEAATPDALAADVLAWLGDAARRAALAVTFDALHRDLRQGASARIAAAIAPYLEAAR.

This sequence belongs to the LpxB family.

The catalysed reaction is a lipid X + a UDP-2-N,3-O-bis[(3R)-3-hydroxyacyl]-alpha-D-glucosamine = a lipid A disaccharide + UDP + H(+). Its pathway is bacterial outer membrane biogenesis; LPS lipid A biosynthesis. Its function is as follows. Condensation of UDP-2,3-diacylglucosamine and 2,3-diacylglucosamine-1-phosphate to form lipid A disaccharide, a precursor of lipid A, a phosphorylated glycolipid that anchors the lipopolysaccharide to the outer membrane of the cell. The protein is Lipid-A-disaccharide synthase of Thiobacillus denitrificans (strain ATCC 25259 / T1).